The chain runs to 679 residues: UvrABC system protein B (679 aa).

One can recognise a Helicase ATP-binding domain in the interval 31-414 (ENLTDGLAHQ…ELEKSGTEII (384 aa)). 44–51 (GVTGSGKT) contacts ATP. The Beta-hairpin motif lies at 97 to 120 (YYDYYQPEAYVPSSDTFIEKDASI). The region spanning 436–589 (QVDDLLSEAR…QIKYNEEHGI (154 aa)) is the Helicase C-terminal domain. The 36-residue stretch at 639–674 (QQQIKKLEQQMYKFAQDLEFEKAAAIRDQLHQLREQ) folds into the UVR domain.

The protein belongs to the UvrB family. In terms of assembly, forms a heterotetramer with UvrA during the search for lesions. Interacts with UvrC in an incision complex.

The protein localises to the cytoplasm. In terms of biological role, the UvrABC repair system catalyzes the recognition and processing of DNA lesions. A damage recognition complex composed of 2 UvrA and 2 UvrB subunits scans DNA for abnormalities. Upon binding of the UvrA(2)B(2) complex to a putative damaged site, the DNA wraps around one UvrB monomer. DNA wrap is dependent on ATP binding by UvrB and probably causes local melting of the DNA helix, facilitating insertion of UvrB beta-hairpin between the DNA strands. Then UvrB probes one DNA strand for the presence of a lesion. If a lesion is found the UvrA subunits dissociate and the UvrB-DNA preincision complex is formed. This complex is subsequently bound by UvrC and the second UvrB is released. If no lesion is found, the DNA wraps around the other UvrB subunit that will check the other stand for damage. This Haemophilus influenzae (strain 86-028NP) protein is UvrABC system protein B.